Here is an 892-residue protein sequence, read N- to C-terminus: Alpha-actinin-1 (892 aa).

N-acetylmethionine is present on Met1. Positions 1-247 (MDHYDSQQTN…IMTYVSSFYH (247 aa)) are actin-binding. At Ser6 the chain carries Phosphoserine. Residue Tyr12 is modified to Phosphotyrosine; by FAK1. 2 consecutive Calponin-homology (CH) domains span residues 31–135 (KQQR…LRFA) and 144–250 (TSAK…HAFS). N6-acetyllysine is present on residues Lys95 and Lys195. 4 Spectrin repeats span residues 274-384 (QLME…WLLN), 394-499 (HLAE…ALER), 509-620 (QLYL…ALTE), and 630-733 (RLRK…EVEN). Positions 274–733 (QLMEDYEKLA…IARTINEVEN (460 aa)) are interaction with DDN. Residue Ser471 is modified to Phosphoserine. Lys676 is subject to N6-acetyllysine. Ser677 carries the post-translational modification Phosphoserine. EF-hand domains are found at residues 746–781 (EQMN…LGYD) and 787–822 (QGEA…ETAD). Positions 759, 761, 763, 765, and 770 each coordinate Ca(2+). Ser890 bears the Phosphoserine mark.

This sequence belongs to the alpha-actinin family. In terms of assembly, homodimer; antiparallel. Interacts with MYOZ2, TTID and LPP. Interacts with DDN. Interacts with PSD. Interacts with MICALL2. Interacts with DNM2 and CTTN. Interacts with PDLIM1. Interacts with PDLIM2. Interacts with PDLIM4 (via PDZ domain). Interacts with IGSF8.

Its subcellular location is the cytoplasm. The protein resides in the cytoskeleton. It localises to the myofibril. It is found in the sarcomere. The protein localises to the z line. Its subcellular location is the cell membrane. The protein resides in the cell junction. It localises to the cell projection. It is found in the ruffle. In terms of biological role, F-actin cross-linking protein which is thought to anchor actin to a variety of intracellular structures. Association with IGSF8 regulates the immune synapse formation and is required for efficient T-cell activation. This is Alpha-actinin-1 (ACTN1) from Homo sapiens (Human).